The sequence spans 97 residues: Putative pterin-4-alpha-carbinolamine dehydratase (97 aa).

The protein belongs to the pterin-4-alpha-carbinolamine dehydratase family.

It catalyses the reaction (4aS,6R)-4a-hydroxy-L-erythro-5,6,7,8-tetrahydrobiopterin = (6R)-L-erythro-6,7-dihydrobiopterin + H2O. The sequence is that of Putative pterin-4-alpha-carbinolamine dehydratase from Opitutus terrae (strain DSM 11246 / JCM 15787 / PB90-1).